A 225-amino-acid polypeptide reads, in one-letter code: Heptaprenylglyceryl phosphate synthase (225 aa).

Lysine 6 provides a ligand contact to sn-glycerol 1-phosphate. Aspartate 8 and threonine 34 together coordinate Mg(2+). Residues 153-158 (YVEYSG), glycine 183, and 203-204 (GN) each bind sn-glycerol 1-phosphate.

This sequence belongs to the GGGP/HepGP synthase family. Group I subfamily. Homodimer. Mg(2+) is required as a cofactor.

The enzyme catalyses sn-glycerol 1-phosphate + all-trans-heptaprenyl diphosphate = 3-heptaprenyl-sn-glycero-1-phosphate + diphosphate. It participates in membrane lipid metabolism; glycerophospholipid metabolism. Functionally, prenyltransferase that catalyzes in vivo the transfer of the heptaprenyl moiety of heptaprenyl pyrophosphate (HepPP; 35 carbon atoms) to the C3 hydroxyl of sn-glycerol-1-phosphate (G1P), producing heptaprenylglyceryl phosphate (HepGP). This reaction is an ether-bond-formation step in the biosynthesis of archaea-type G1P-based membrane lipids found in Bacillales. The chain is Heptaprenylglyceryl phosphate synthase from Listeria monocytogenes serotype 4b (strain F2365).